The primary structure comprises 329 residues: Serine dehydratase-like (329 aa).

Residue methionine 1 is modified to N-acetylmethionine. Lysine 48 carries the N6-(pyridoxal phosphate)lysine modification.

It belongs to the serine/threonine dehydratase family. Monomer. Homodimer. Pyridoxal 5'-phosphate is required as a cofactor. In terms of tissue distribution, expressed in lung cancer cell lines.

The enzyme catalyses L-serine = pyruvate + NH4(+). It catalyses the reaction L-threonine = 2-oxobutanoate + NH4(+). It carries out the reaction L-glutamate = D-glutamate. In terms of biological role, catalyzes the pyridoxal-phosphate-dependent dehydrative deamination of L-threonine and L-serine to ammonia and alpha-ketobutyrate and pyruvate, respectively. Also exhibits racemase activity towards L-glutamate and D-glutamate. The polypeptide is Serine dehydratase-like (SDSL) (Homo sapiens (Human)).